The chain runs to 727 residues: Translation initiation factor IF-2, mitochondrial (727 aa).

Residues 1–29 constitute a mitochondrion transit peptide; sequence MNRKILKLENLLRFHTICRQLHSLCQRRM. Residues 178 to 348 form the tr-type G domain; sequence PRSPVVTIMG…IALAEMLELK (171 aa). Residues 187–194 form a G1 region; sequence GHVDHGKT. Residue 187 to 194 coordinates GTP; the sequence is GHVDHGKT. The G2 stretch occupies residues 212–216; it reads GITQH. GTP is bound by residues 234–237 and 288–291; these read DTPG and NKCD. Residues 234–237 are G3; the sequence is DTPG. Residues 288-291 form a G4 region; it reads NKCD. The G5 stretch occupies residues 324 to 326; it reads SAL. Thr-688 is subject to Phosphothreonine.

This sequence belongs to the TRAFAC class translation factor GTPase superfamily. Classic translation factor GTPase family. IF-2 subfamily. As to quaternary structure, monomer.

It is found in the mitochondrion. In terms of biological role, one of the essential components for the initiation of protein synthesis. Protects formylmethionyl-tRNA from spontaneous hydrolysis and promotes its binding to the 30S ribosomal subunits. Also involved in the hydrolysis of GTP during the formation of the 70S ribosomal complex. This Bos taurus (Bovine) protein is Translation initiation factor IF-2, mitochondrial (MTIF2).